The chain runs to 532 residues: Cyclin-L1 (532 aa).

Cyclin-like stretches follow at residues 94 to 196 (ELIQ…RVLK) and 209 to 293 (KIIV…ETLR). At T331 the chain carries Phosphothreonine. Residues 332-532 (PALSTLGGFS…SRSGHGRHRR (201 aa)) are disordered. Residues S341 and S344 each carry the phosphoserine modification. Residues K345 and K353 each participate in a glycyl lysine isopeptide (Lys-Gly) (interchain with G-Cter in SUMO2) cross-link. The span at 348–358 (SPREVKAEEKS) shows a compositional bias: basic and acidic residues. Phosphoserine occurs at positions 358 and 361. A compositionally biased stretch (basic and acidic residues) spans 367-376 (VKKEPEDRQQ). Residue K368 forms a Glycyl lysine isopeptide (Lys-Gly) (interchain with G-Cter in SUMO2) linkage. A Phosphoserine modification is found at S380. 4 stretches are compositionally biased toward basic residues: residues 388–424 (DSKRSRTSRSASRSRSRTRSRSRSHSPRRHYNNRRSR), 444–458 (RRHHNHGSPHLKAKH), 466–482 (SNRHGHKRKKSRSRSQS), and 492–504 (KKHRHERGHHRDR). The segment at 396–438 (RSASRSRSRTRSRSRSHSPRRHYNNRRSRSGTYSSRSRSRSRS) is RS. Position 451 is a phosphoserine (S451). A compositionally biased stretch (basic and acidic residues) spans 505–514 (RERSRSFERS). Residues 515–532 (HKGKHHGGSRSGHGRHRR) show a composition bias toward basic residues.

This sequence belongs to the cyclin family. Cyclin L subfamily. Interacts with POLR2A via its hyperphosphorylated C-terminal domain (CTD). Interacts with CDK11A, CDK11B, CDK12 and CDK13. May form a ternary complex with CDK11B and casein kinase II (CKII). Interacts with pre-mRNA-splicing factors, including at least SRSF1, SRSF2 and SRSF7/SLU7. Widely expressed (at protein level).

The protein localises to the nucleus speckle. It is found in the nucleus. Its subcellular location is the nucleoplasm. It localises to the cytoplasm. Involved in pre-mRNA splicing. Functions in association with cyclin-dependent kinases (CDKs). May play a role in the regulation of RNA polymerase II (pol II). Inhibited by the CDK-specific inhibitor CDKN1A/p21. This chain is Cyclin-L1 (Ccnl1), found in Mus musculus (Mouse).